An 835-amino-acid chain; its full sequence is Serine/threonine-protein kinase TNNI3K (835 aa).

Residues Ser-21–Ser-51 adopt a coiled-coil conformation. 10 ANK repeats span residues Asn-66 to Arg-96, Asn-100 to Gln-129, Gly-133 to Ile-162, Val-166 to Val-195, Val-199 to Val-228, Glu-234 to Pro-263, Tyr-269 to Leu-298, Phe-304 to His-335, Asp-339 to Leu-368, and Asp-381 to Glu-410. The Protein kinase domain occupies Ile-463–Leu-723. ATP contacts are provided by residues Ile-469–Val-477 and Lys-490. Asp-588 functions as the Proton acceptor in the catalytic mechanism. The segment covering Ala-732–Ser-746 has biased composition (low complexity). The interval Ala-732 to Asn-751 is disordered.

The protein belongs to the protein kinase superfamily. TKL Ser/Thr protein kinase family. MAP kinase kinase kinase subfamily. Interacts with TNNI3, ACTC1, ACTA1, MYBPC3, AIP, FABP3 and HADHB. Requires Mg(2+) as cofactor. Post-translationally, autophosphorylated. Highly expressed in both adult and fetal heart.

It localises to the nucleus. It is found in the cytoplasm. It catalyses the reaction L-seryl-[protein] + ATP = O-phospho-L-seryl-[protein] + ADP + H(+). The enzyme catalyses L-threonyl-[protein] + ATP = O-phospho-L-threonyl-[protein] + ADP + H(+). In terms of biological role, may play a role in cardiac physiology. In Homo sapiens (Human), this protein is Serine/threonine-protein kinase TNNI3K.